A 141-amino-acid polypeptide reads, in one-letter code: Large ribosomal subunit protein uL11 (141 aa).

It belongs to the universal ribosomal protein uL11 family. Part of the ribosomal stalk of the 50S ribosomal subunit. Interacts with L10 and the large rRNA to form the base of the stalk. L10 forms an elongated spine to which L12 dimers bind in a sequential fashion forming a multimeric L10(L12)X complex. In terms of processing, one or more lysine residues are methylated.

Its function is as follows. Forms part of the ribosomal stalk which helps the ribosome interact with GTP-bound translation factors. In Limosilactobacillus fermentum (strain NBRC 3956 / LMG 18251) (Lactobacillus fermentum), this protein is Large ribosomal subunit protein uL11.